The chain runs to 207 residues: Large ribosomal subunit protein uL3c (207 aa).

A disordered region spans residues 128–148 (FTRGPMTHGSKNHRAPGSIGM).

This sequence belongs to the universal ribosomal protein uL3 family. Part of the 50S ribosomal subunit.

The protein resides in the plastid. It localises to the chloroplast. Its function is as follows. One of the primary rRNA binding proteins, it binds directly near the 3'-end of the 23S rRNA, where it nucleates assembly of the 50S subunit. The sequence is that of Large ribosomal subunit protein uL3c (rpl3) from Trieres chinensis (Marine centric diatom).